A 582-amino-acid chain; its full sequence is Zinc finger protein 614 (582 aa).

The KRAB domain maps to Leu-8–Pro-79. Residues His-202–His-224 form a C2H2-type 1 zinc finger. The C2H2-type 2; degenerate zinc finger occupies Lys-254 to His-278. 10 C2H2-type zinc fingers span residues Tyr-284 to His-306, Tyr-312 to His-334, Tyr-340 to His-362, Tyr-368 to His-390, Tyr-396 to His-418, Tyr-424 to His-446, Tyr-452 to His-474, Phe-480 to His-502, Tyr-508 to His-530, and Tyr-536 to His-558.

The protein belongs to the krueppel C2H2-type zinc-finger protein family.

It localises to the nucleus. Functionally, may be involved in transcriptional regulation. This chain is Zinc finger protein 614 (ZNF614), found in Macaca fascicularis (Crab-eating macaque).